The following is a 207-amino-acid chain: Vexin (207 aa).

Residues 55-102 (LELLPHRGDRRDPGDGRRFGRLQTARPPTAHPAKASARPVGISEPKTS) are disordered. Basic and acidic residues predominate over residues 58-72 (LPHRGDRRDPGDGRR).

It belongs to the vexin family.

The protein localises to the cell membrane. Its subcellular location is the nucleus. Its function is as follows. Required for neurogenesis in the neural plate and retina. Strongly cooperates with neural bHLH factors to promote neurogenesis. This is Vexin from Pongo abelii (Sumatran orangutan).